A 474-amino-acid chain; its full sequence is L-arabinose isomerase (474 aa).

4 residues coordinate Mn(2+): glutamate 306, glutamate 331, histidine 348, and histidine 447.

The protein belongs to the arabinose isomerase family. Requires Mn(2+) as cofactor.

The enzyme catalyses beta-L-arabinopyranose = L-ribulose. The protein operates within carbohydrate degradation; L-arabinose degradation via L-ribulose; D-xylulose 5-phosphate from L-arabinose (bacterial route): step 1/3. Its function is as follows. Catalyzes the conversion of L-arabinose to L-ribulose. This chain is L-arabinose isomerase, found in Leuconostoc mesenteroides subsp. mesenteroides (strain ATCC 8293 / DSM 20343 / BCRC 11652 / CCM 1803 / JCM 6124 / NCDO 523 / NBRC 100496 / NCIMB 8023 / NCTC 12954 / NRRL B-1118 / 37Y).